A 135-amino-acid chain; its full sequence is Retinol-binding protein 1 (135 aa).

Omega-N-methylarginine is present on tryptophan 9. Positions 22–32 (RALDVNVALRK) are important for interaction with STRA6. Residues lysine 41, methionine 63, and glutamine 109 each contribute to the all-trans-retinol site.

The protein belongs to the calycin superfamily. Fatty-acid binding protein (FABP) family. Interacts (only as retinol-free apoprotein) with STRA6. In terms of tissue distribution, detected in nearly all the tissues with higher expression in adult ovary, pancreas, pituitary gland and adrenal gland, and fetal liver.

It is found in the cytoplasm. Its subcellular location is the lipid droplet. Functionally, cytoplasmic retinol-binding protein. Accepts retinol from the transport protein STRA6, and thereby contributes to retinol uptake, storage and retinoid homeostasis. This Homo sapiens (Human) protein is Retinol-binding protein 1 (RBP1).